Consider the following 222-residue polypeptide: S-crystallin SL20-1 (222 aa).

In terms of domain architecture, GST N-terminal spans 2 to 80 (PNYTLYYFNG…YLARENGYYG (79 aa)). Residues 82-222 (NNMDMFRIDY…YLKKRNNTNW (141 aa)) enclose the GST C-terminal domain.

The protein belongs to the GST superfamily. As to expression, lens.

Its function is as follows. S-crystallins are structural components of squids and octopi eye lens. Contains relatively little if any GST activity. This is S-crystallin SL20-1 from Nototodarus sloanii (Wellington flying squid).